A 212-amino-acid chain; its full sequence is 2,3-bisphosphoglycerate-dependent phosphoglycerate mutase (212 aa).

Substrate is bound by residues 9 to 16 (RHGQSEWN), 22 to 23 (TG), Arg-61, 88 to 91 (ERDY), Lys-99, 115 to 116 (RR), and 159 to 160 (GN). His-10 functions as the Tele-phosphohistidine intermediate in the catalytic mechanism. Glu-88 (proton donor/acceptor) is an active-site residue.

It belongs to the phosphoglycerate mutase family. BPG-dependent PGAM subfamily. In terms of assembly, homodimer.

The enzyme catalyses (2R)-2-phosphoglycerate = (2R)-3-phosphoglycerate. Its pathway is carbohydrate degradation; glycolysis; pyruvate from D-glyceraldehyde 3-phosphate: step 3/5. Its function is as follows. Catalyzes the interconversion of 2-phosphoglycerate and 3-phosphoglycerate. This chain is 2,3-bisphosphoglycerate-dependent phosphoglycerate mutase, found in Methylorubrum extorquens (strain CM4 / NCIMB 13688) (Methylobacterium extorquens).